Reading from the N-terminus, the 331-residue chain is Probable cytosolic iron-sulfur protein assembly protein Ciao1 (331 aa).

WD repeat units follow at residues 12–51, 57–96, 97–136, 142–181, 188–227, 246–285, and 297–331; these read GHKG…WTTK, GHKR…ATLE, GHEN…EFEC, AHSQ…SDWD, SHTS…NDAG, EHSR…KRDA, and AHEQ…KLQE.

It belongs to the WD repeat CIA1 family.

Essential component of the cytosolic iron-sulfur (Fe/S) protein assembly machinery. Required for the maturation of extramitochondrial Fe/S proteins. The polypeptide is Probable cytosolic iron-sulfur protein assembly protein Ciao1 (Drosophila virilis (Fruit fly)).